The chain runs to 204 residues: Dephospho-CoA kinase (204 aa).

The region spanning 3–200 (VVAITGGIGS…ETYMAFASQQ (198 aa)) is the DPCK domain. ATP is bound at residue 11-16 (GSGKTT).

Belongs to the CoaE family.

It localises to the cytoplasm. It catalyses the reaction 3'-dephospho-CoA + ATP = ADP + CoA + H(+). Its pathway is cofactor biosynthesis; coenzyme A biosynthesis; CoA from (R)-pantothenate: step 5/5. Its function is as follows. Catalyzes the phosphorylation of the 3'-hydroxyl group of dephosphocoenzyme A to form coenzyme A. In Aeromonas hydrophila, this protein is Dephospho-CoA kinase.